Here is a 372-residue protein sequence, read N- to C-terminus: Glutamate 5-kinase (372 aa).

Position 14 (Lys14) interacts with ATP. The substrate site is built by Ser54, Asp141, and Asn153. 173–174 (TD) lines the ATP pocket. One can recognise a PUA domain in the interval 280-358 (AGRIVLDQGA…TDILSILGFV (79 aa)).

Belongs to the glutamate 5-kinase family.

Its subcellular location is the cytoplasm. The enzyme catalyses L-glutamate + ATP = L-glutamyl 5-phosphate + ADP. It participates in amino-acid biosynthesis; L-proline biosynthesis; L-glutamate 5-semialdehyde from L-glutamate: step 1/2. Functionally, catalyzes the transfer of a phosphate group to glutamate to form L-glutamate 5-phosphate. This is Glutamate 5-kinase from Herminiimonas arsenicoxydans.